The primary structure comprises 393 residues: MATVEEIRKAQRAEGPATVLAIGTANPSNCVDQSAYPDFLFRITTSDHKTELKEKFKHMCEGSMIKKRYLHLTEEILKNNPNICEHKAPSLNARQEIAVAEAPKLGKRAAQKAIEEWSQSKSKITHLVFCTTTSVELPGADYQLTKLLGLSPSVKRSMMYQQGCYGGGTALRLAKDLAENNKGARVLVVCVEITVMSFQAPSRNDTDELDVLVGQALFADGASAVIIGSDPILAIEKPLFELVFATQTLIPDSGHVICANLTEAGLIPHLLKDAPIVISQNIERRLVEVFKPLGISDWNSIFWVAHPGGPAILNQIELKLGLKPEKLRAARHVLSEYGNMSSACVLFVLDEMRKGTIEKGMGTTGEGLEWGLLFGFGPGLTIETVVLHSVSIN.

Cys-164 is an active-site residue.

Belongs to the thiolase-like superfamily. Chalcone/stilbene synthases family. In terms of tissue distribution, expressed in seedlings after illumination with UV light. No expression detectable in flowers. It is not known for sure whether CHSG encodes a chalcone synthase or a very closely related condensing enzyme.

The catalysed reaction is (E)-4-coumaroyl-CoA + 3 malonyl-CoA + 3 H(+) = 2',4,4',6'-tetrahydroxychalcone + 3 CO2 + 4 CoA. The protein operates within secondary metabolite biosynthesis; flavonoid biosynthesis. In terms of biological role, the primary product of this enzyme is 4,2',4',6'-tetrahydroxychalcone (also termed naringenin-chalcone or chalcone) which can under specific conditions spontaneously isomerize into naringenin. This Petunia hybrida (Petunia) protein is Chalcone synthase G (CHSG).